We begin with the raw amino-acid sequence, 492 residues long: UDP-glucosyl transferase 73DL1 (492 aa).

H27 serves as the catalytic Proton acceptor. D131 serves as the catalytic Charge relay. Positions 352, 353, 370, 375, 378, and 392 each coordinate UDP.

The protein belongs to the UDP-glycosyltransferase family. Mainly expressed in flowers, flower buds and young leaves, and, to a lesser extent, in old leaves, stems and roots.

It functions in the pathway secondary metabolite biosynthesis; terpenoid biosynthesis. Its function is as follows. Component of the oleanane-type triterpene saponins (e.g. saponarioside A and saponarioside B) biosynthetic pathway, leading to the production of natural products with detergent properties used as traditional sources of soap. A glycosyltransferase that mediates the conversion of QA-mono to QA-di via the elongation of the C-3 sugar chain with a D-galactose. The polypeptide is UDP-glucosyl transferase 73DL1 (Saponaria officinalis (Common soapwort)).